The sequence spans 474 residues: UDP-N-acetylmuramate--L-alanine ligase (474 aa).

ATP is bound at residue 108–114; that stretch reads GTHGKTT.

The protein belongs to the MurCDEF family.

It localises to the cytoplasm. The enzyme catalyses UDP-N-acetyl-alpha-D-muramate + L-alanine + ATP = UDP-N-acetyl-alpha-D-muramoyl-L-alanine + ADP + phosphate + H(+). It functions in the pathway cell wall biogenesis; peptidoglycan biosynthesis. In terms of biological role, cell wall formation. In Chloroflexus aggregans (strain MD-66 / DSM 9485), this protein is UDP-N-acetylmuramate--L-alanine ligase.